The sequence spans 325 residues: Tetraacyldisaccharide 4'-kinase (325 aa).

51-58 (VVGGAGKT) contributes to the ATP binding site.

The protein belongs to the LpxK family.

The enzyme catalyses a lipid A disaccharide + ATP = a lipid IVA + ADP + H(+). Its pathway is glycolipid biosynthesis; lipid IV(A) biosynthesis; lipid IV(A) from (3R)-3-hydroxytetradecanoyl-[acyl-carrier-protein] and UDP-N-acetyl-alpha-D-glucosamine: step 6/6. Transfers the gamma-phosphate of ATP to the 4'-position of a tetraacyldisaccharide 1-phosphate intermediate (termed DS-1-P) to form tetraacyldisaccharide 1,4'-bis-phosphate (lipid IVA). In Paramagnetospirillum magneticum (strain ATCC 700264 / AMB-1) (Magnetospirillum magneticum), this protein is Tetraacyldisaccharide 4'-kinase.